The sequence spans 156 residues: Single-stranded DNA-binding protein 1 (156 aa).

One can recognise an SSB domain in the interval M1–E104. The tract at residues Q122 to P146 is disordered.

Homotetramer.

The protein is Single-stranded DNA-binding protein 1 (ssb1) of Staphylococcus aureus (strain MSSA476).